We begin with the raw amino-acid sequence, 413 residues long: N5-carboxyaminoimidazole ribonucleotide synthase (413 aa).

Residues Met-1–Gly-21 are disordered. Residues Lys-122, Lys-162, Glu-199–Val-202, Glu-207, and Asn-289–Glu-290 each bind ATP. An ATP-grasp domain is found at Arg-126–Met-319.

It belongs to the PurK/PurT family. As to quaternary structure, homodimer.

It carries out the reaction 5-amino-1-(5-phospho-beta-D-ribosyl)imidazole + hydrogencarbonate + ATP = 5-carboxyamino-1-(5-phospho-D-ribosyl)imidazole + ADP + phosphate + 2 H(+). It participates in purine metabolism; IMP biosynthesis via de novo pathway; 5-amino-1-(5-phospho-D-ribosyl)imidazole-4-carboxylate from 5-amino-1-(5-phospho-D-ribosyl)imidazole (N5-CAIR route): step 1/2. Functionally, catalyzes the ATP-dependent conversion of 5-aminoimidazole ribonucleotide (AIR) and HCO(3)(-) to N5-carboxyaminoimidazole ribonucleotide (N5-CAIR). The sequence is that of N5-carboxyaminoimidazole ribonucleotide synthase from Corynebacterium ammoniagenes (Brevibacterium ammoniagenes).